Reading from the N-terminus, the 387-residue chain is Eukaryotic translation initiation factor 3 subunit M (387 aa).

A PCI domain is found at 181-340 (LSSKVMIELL…RKVHISSTMH (160 aa)).

Belongs to the eIF-3 subunit M family. Component of the eukaryotic translation initiation factor 3 (eIF-3) complex. The eIF-3 complex interacts with pix.

The protein resides in the cytoplasm. It is found in the golgi apparatus. Component of the eukaryotic translation initiation factor 3 (eIF-3) complex, which is involved in protein synthesis of a specialized repertoire of mRNAs and, together with other initiation factors, stimulates binding of mRNA and methionyl-tRNAi to the 40S ribosome. The eIF-3 complex specifically targets and initiates translation of a subset of mRNAs involved in cell proliferation. The polypeptide is Eukaryotic translation initiation factor 3 subunit M (Drosophila grimshawi (Hawaiian fruit fly)).